The chain runs to 287 residues: Aromatic amino acid exporter YddG (287 aa).

Topologically, residues 1-5 are cytoplasmic; that stretch reads MSRSS. Residues 6 to 24 form a helical membrane-spanning segment; that stretch reads ATLIGFTAILLWSTLALAT. The EamA 1 domain occupies 7–136; that stretch reads TLIGFTAILL…MGLAGTVVLL (130 aa). The Periplasmic segment spans residues 25–31; the sequence is SSTGAVP. Residues 32 to 54 form a helical membrane-spanning segment; the sequence is PFLLTALTFTIGGAVGIAAGLAR. The Cytoplasmic segment spans residues 55–65; the sequence is GVGLSVLRQPW. Residues 66-86 form a helical membrane-spanning segment; the sequence is PVWVHGIGGLFGYHFFYFSAL. Residues 87 to 90 are Periplasmic-facing; the sequence is KLAP. The chain crosses the membrane as a helical span at residues 91 to 111; the sequence is PAEAGLVAYLWPLLIVLFSAF. Topologically, residues 112-118 are cytoplasmic; it reads LPGERLR. The helical transmembrane segment at 119-139 threads the bilayer; sequence PAHVAGALMGLAGTVVLLGAR. The Periplasmic portion of the chain corresponds to 140–149; that stretch reads AGGFGFAPEY. The helical transmembrane segment at 150-170 threads the bilayer; sequence VPGYLAAAACAVIWSVYSVAS. The EamA 2 domain occupies 151-281; it reads PGYLAAAACA…ALIVGGAAVA (131 aa). Residues 171 to 176 lie on the Cytoplasmic side of the membrane; that stretch reads RRFARV. Residues 177-198 form a helical membrane-spanning segment; the sequence is PTEVVAGFCLATAALSALCHIL. At 199–208 the chain is on the periplasmic side; it reads FEPSVWPVGS. The helical transmembrane segment at 209-233 threads the bilayer; sequence EWLAVVALGIGPVGIAFYTWDIGMK. The Cytoplasmic portion of the chain corresponds to 234–236; it reads RGD. The helical transmembrane segment at 237-258 threads the bilayer; sequence VRLLGVLSYAAPVLSTLLLVVA. Residues 259–264 are Periplasmic-facing; sequence GFAAPS. The chain crosses the membrane as a helical span at residues 265–284; sequence GALAIACALIVGGAAVATLL. Residues 285–287 are Cytoplasmic-facing; sequence ARR.

The protein belongs to the drug/metabolite transporter (DMT) superfamily. Aromatic amino acid/paraquat exporter (ArAA/P-E) (TC 2.A.7.17) family.

It is found in the cell inner membrane. The enzyme catalyses L-threonine(in) = L-threonine(out). It carries out the reaction L-methionine(in) = L-methionine(out). It catalyses the reaction L-lysine(in) = L-lysine(out). The catalysed reaction is L-glutamate(out) = L-glutamate(in). Functionally, amino acid transporter with broad substrate specificity. Can transport various amino acids, including L-threonine, L-methionine, L-lysine and L-glutamate. This is Aromatic amino acid exporter YddG from Ancylobacter novellus (strain ATCC 8093 / DSM 506 / JCM 20403 / CCM 1077 / IAM 12100 / NBRC 12443 / NCIMB 10456) (Starkeya novella).